Consider the following 412-residue polypeptide: Aurora kinase (412 aa).

The tract at residues 94-119 (NEKVRPSKSSHIPVKSPIRKKGHSPA) is disordered. Residues 148 to 401 (FEIGKVLGKG…LAEVMNHPWI (254 aa)) enclose the Protein kinase domain. Residues 154 to 162 (LGKGKLGKV) and K177 each bind ATP. D271 serves as the catalytic Proton acceptor.

The protein belongs to the protein kinase superfamily. Ser/Thr protein kinase family. Aurora subfamily.

The protein localises to the nucleus. It localises to the cytoplasm. It is found in the cytoskeleton. Its subcellular location is the spindle. The protein resides in the chromosome. The protein localises to the centromere. It localises to the kinetochore. It catalyses the reaction L-seryl-[protein] + ATP = O-phospho-L-seryl-[protein] + ADP + H(+). The catalysed reaction is L-threonyl-[protein] + ATP = O-phospho-L-threonyl-[protein] + ADP + H(+). In terms of biological role, component of the chromosomal passenger complex (CPC), a complex that acts as a key regulator of chromosome segregation and cytokinesis. Has a role in error-correction of aberrent kinetochore-microtubule attachments to ensure that sister kinetochores become bioriented and connect to opposite poles by promoting spindle assembly checkpoint signaling. This is Aurora kinase (IPL1) from Debaryomyces hansenii (strain ATCC 36239 / CBS 767 / BCRC 21394 / JCM 1990 / NBRC 0083 / IGC 2968) (Yeast).